A 312-amino-acid chain; its full sequence is Very-long-chain 3-oxoacyl-CoA reductase-like protein At1g24470 (312 aa).

A helical transmembrane segment spans residues 14–34 (LHFVCFIGFLFLLRVLFIPLL). NADP(+) is bound at residue 52-81 (GSWAMVTGATEGIGRAFAHELAKHGLNLIL). Serine 190 contacts substrate. Catalysis depends on tyrosine 205, which acts as the Proton acceptor.

The protein belongs to the short-chain dehydrogenases/reductases (SDR) family. Expressed in green siliques, flowers, inflorescence stems and leaves. Not detected in roots.

The protein resides in the endoplasmic reticulum membrane. In terms of biological role, probable reductase, but unlike KCR1, has no beta-ketoacyl-coenzyme A reductase activity. The sequence is that of Very-long-chain 3-oxoacyl-CoA reductase-like protein At1g24470 (KCR2) from Arabidopsis thaliana (Mouse-ear cress).